A 463-amino-acid chain; its full sequence is Spermidine/putrescine import ATP-binding protein PotA (463 aa).

The ABC transporter domain maps to isoleucine 10–isoleucine 240. Glycine 42–threonine 49 is a binding site for ATP.

Belongs to the ABC transporter superfamily. Spermidine/putrescine importer (TC 3.A.1.11.1) family. The complex is composed of two ATP-binding proteins (PotA), two transmembrane proteins (PotB and PotC) and a solute-binding protein (PotD).

It localises to the cell inner membrane. It catalyses the reaction ATP + H2O + polyamine-[polyamine-binding protein]Side 1 = ADP + phosphate + polyamineSide 2 + [polyamine-binding protein]Side 1.. Part of the ABC transporter complex PotABCD involved in spermidine/putrescine import. Responsible for energy coupling to the transport system. This Bacteroides thetaiotaomicron (strain ATCC 29148 / DSM 2079 / JCM 5827 / CCUG 10774 / NCTC 10582 / VPI-5482 / E50) protein is Spermidine/putrescine import ATP-binding protein PotA.